A 258-amino-acid polypeptide reads, in one-letter code: 5'-nucleotidase SurE (258 aa).

The a divalent metal cation site is built by Asp-16, Asp-17, Ser-47, and Asn-99.

It belongs to the SurE nucleotidase family. It depends on a divalent metal cation as a cofactor.

The protein resides in the cytoplasm. It catalyses the reaction a ribonucleoside 5'-phosphate + H2O = a ribonucleoside + phosphate. Its function is as follows. Nucleotidase that shows phosphatase activity on nucleoside 5'-monophosphates. The chain is 5'-nucleotidase SurE from Coxiella burnetii (strain CbuK_Q154) (Coxiella burnetii (strain Q154)).